The sequence spans 304 residues: Aspartate carbamoyltransferase catalytic subunit (304 aa).

Arginine 53 and threonine 54 together coordinate carbamoyl phosphate. L-aspartate is bound at residue lysine 82. Residues arginine 103, histidine 131, and glutamine 134 each coordinate carbamoyl phosphate. 2 residues coordinate L-aspartate: arginine 163 and arginine 224. Carbamoyl phosphate-binding residues include leucine 263 and proline 264.

Belongs to the aspartate/ornithine carbamoyltransferase superfamily. ATCase family. Heterooligomer of catalytic and regulatory chains.

The catalysed reaction is carbamoyl phosphate + L-aspartate = N-carbamoyl-L-aspartate + phosphate + H(+). The protein operates within pyrimidine metabolism; UMP biosynthesis via de novo pathway; (S)-dihydroorotate from bicarbonate: step 2/3. Its function is as follows. Catalyzes the condensation of carbamoyl phosphate and aspartate to form carbamoyl aspartate and inorganic phosphate, the committed step in the de novo pyrimidine nucleotide biosynthesis pathway. The sequence is that of Aspartate carbamoyltransferase catalytic subunit from Haloquadratum walsbyi (strain DSM 16790 / HBSQ001).